The primary structure comprises 379 residues: 2-methylcitrate synthase (379 aa).

His-187 serves as a coordination point for substrate. His-222 is an active-site residue. 264–268 (KVMGF) serves as a coordination point for CoA. Residue His-270 is part of the active site. Arg-279 provides a ligand contact to substrate. Residue Asp-321 is part of the active site. Residues Arg-346 and Arg-365 each coordinate substrate.

It belongs to the citrate synthase family. Homodimer.

The catalysed reaction is propanoyl-CoA + oxaloacetate + H2O = (2S,3S)-2-methylcitrate + CoA + H(+). It carries out the reaction oxaloacetate + acetyl-CoA + H2O = citrate + CoA + H(+). The protein operates within organic acid metabolism; propanoate degradation. It participates in carbohydrate metabolism; tricarboxylic acid cycle; isocitrate from oxaloacetate: step 1/2. In terms of biological role, involved in the catabolism of short chain fatty acids (SCFA) via the tricarboxylic acid (TCA)(acetyl degradation route) and via the 2-methylcitrate cycle I (propionate degradation route). Catalyzes the Claisen condensation of propionyl-CoA and oxaloacetate (OAA) to yield 2-methylcitrate (2-MC) and CoA. Also catalyzes the condensation of oxaloacetate with acetyl-CoA but with a lower specificity. This Antarctic bacterium DS2-3R protein is 2-methylcitrate synthase (gltA).